The chain runs to 92 residues: Progonadoliberin-1 (92 aa).

Residues 1–23 form the signal peptide; it reads MGLIPKLLAGLVLLTLCVENGSG. Position 24 is a pyrrolidone carboxylic acid (glutamine 24). Glycine amide is present on glycine 33.

It belongs to the GnRH family. Post-translationally, the precursor is cleaved by ACE, which removes the Gly-Lys-Arg peptide at the C-terminus, leading to mature hormone. The mature form of Gonadoliberin-1 is also cleaved and degraded by ACE.

The protein resides in the secreted. Stimulates the secretion of gonadotropins; it stimulates the secretion of both luteinizing and follicle-stimulating hormones. The protein is Progonadoliberin-1 (GNRH1) of Cavia porcellus (Guinea pig).